The chain runs to 233 residues: Protein YIPF6 (233 aa).

The Cytoplasmic segment spans residues 1 to 84; that stretch reads MAETEGFGDS…PKKSTTLLRD (84 aa). The chain crosses the membrane as a helical span at residues 85–105; sequence WDLWGPLVLCVSLALMLQGGN. At 106-111 the chain is on the lumenal side; the sequence is ADSKDD. Residues 112–132 traverse the membrane as a helical segment; it reads GGPQFAEVFVIIWFGAVVITL. Residues 133–142 are Cytoplasmic-facing; it reads NSKLLGGTIS. The chain crosses the membrane as a helical span at residues 143-163; the sequence is FFQSLCVLGYCILPLTVAMLV. At 164–180 the chain is on the lumenal side; the sequence is CRLVLLLSHTTASFIVR. A helical transmembrane segment spans residues 181–201; it reads LVVVTVMFAWSTFASTAFLAD. Topologically, residues 202-208 are cytoplasmic; it reads SQPPNRR. A helical membrane pass occupies residues 209–229; the sequence is ALAVYPIFLFYFVISWMVLTF. Residues 230–233 lie on the Lumenal side of the membrane; the sequence is NTVS.

It belongs to the YIP1 family.

It is found in the golgi apparatus membrane. This Xenopus tropicalis (Western clawed frog) protein is Protein YIPF6 (yipf6).